The primary structure comprises 554 residues: Phosphomethylpyrimidine synthase (554 aa).

Substrate is bound by residues N188, M217, Y246, H282, 302–304, 343–346, and E382; these read SRG and DGLR. H386 is a binding site for Zn(2+). Y409 provides a ligand contact to substrate. Position 450 (H450) interacts with Zn(2+). 3 residues coordinate [4Fe-4S] cluster: C530, C533, and C538.

Belongs to the ThiC family. As to quaternary structure, homodimer. [4Fe-4S] cluster serves as cofactor.

It carries out the reaction 5-amino-1-(5-phospho-beta-D-ribosyl)imidazole + S-adenosyl-L-methionine = 4-amino-2-methyl-5-(phosphooxymethyl)pyrimidine + CO + 5'-deoxyadenosine + formate + L-methionine + 3 H(+). It functions in the pathway cofactor biosynthesis; thiamine diphosphate biosynthesis. In terms of biological role, catalyzes the synthesis of the hydroxymethylpyrimidine phosphate (HMP-P) moiety of thiamine from aminoimidazole ribotide (AIR) in a radical S-adenosyl-L-methionine (SAM)-dependent reaction. The protein is Phosphomethylpyrimidine synthase of Coxiella burnetii (strain Dugway 5J108-111).